The chain runs to 319 residues: Beta-ketoacyl-[acyl-carrier-protein] synthase III (319 aa).

Residues Cys112 and His246 contribute to the active site. The tract at residues 247–251 (QANFR) is ACP-binding. Residue Asn276 is part of the active site.

This sequence belongs to the thiolase-like superfamily. FabH family. In terms of assembly, homodimer.

It is found in the cytoplasm. It carries out the reaction malonyl-[ACP] + acetyl-CoA + H(+) = 3-oxobutanoyl-[ACP] + CO2 + CoA. Its pathway is lipid metabolism; fatty acid biosynthesis. In terms of biological role, catalyzes the condensation reaction of fatty acid synthesis by the addition to an acyl acceptor of two carbons from malonyl-ACP. Catalyzes the first condensation reaction which initiates fatty acid synthesis and may therefore play a role in governing the total rate of fatty acid production. Possesses both acetoacetyl-ACP synthase and acetyl transacylase activities. Its substrate specificity determines the biosynthesis of branched-chain and/or straight-chain of fatty acids. The polypeptide is Beta-ketoacyl-[acyl-carrier-protein] synthase III (Shewanella oneidensis (strain ATCC 700550 / JCM 31522 / CIP 106686 / LMG 19005 / NCIMB 14063 / MR-1)).